The chain runs to 269 residues: MEKQKKSINIYILSDSVGDTGDQVAHAAAAQFLDVEFNFARHPFIHTISLLDSILNKAVREDAMVFSTFVNPELNQYAADFCNQNTLKYLDVLTPAVNLFAEKTNLAPENKPGRTHSLNAKYFDKISAMEFAVTYDDGKDPAGFLKADIVLLGVSRTSKTPLSLYLANKGYKVANLPLVPQTQIPDEIWQVDSNKIFGLTTTKEVLNNIRRQRMIAYGLNPESSYSNMDSINKELQSADELFKKIGCLVINTANKSIEETATIIMESLV.

An ADP-binding site is contributed by 153–160 (GVSRTSKT).

The protein belongs to the pyruvate, phosphate/water dikinase regulatory protein family. PDRP subfamily.

The catalysed reaction is N(tele)-phospho-L-histidyl/L-threonyl-[pyruvate, phosphate dikinase] + ADP = N(tele)-phospho-L-histidyl/O-phospho-L-threonyl-[pyruvate, phosphate dikinase] + AMP + H(+). It catalyses the reaction N(tele)-phospho-L-histidyl/O-phospho-L-threonyl-[pyruvate, phosphate dikinase] + phosphate + H(+) = N(tele)-phospho-L-histidyl/L-threonyl-[pyruvate, phosphate dikinase] + diphosphate. Its function is as follows. Bifunctional serine/threonine kinase and phosphorylase involved in the regulation of the pyruvate, phosphate dikinase (PPDK) by catalyzing its phosphorylation/dephosphorylation. The sequence is that of Putative pyruvate, phosphate dikinase regulatory protein from Pediococcus pentosaceus (strain ATCC 25745 / CCUG 21536 / LMG 10740 / 183-1w).